A 231-amino-acid chain; its full sequence is Demethylmenaquinone methyltransferase (231 aa).

S-adenosyl-L-methionine is bound by residues Thr62, Asp80, 100 to 101 (DA), and Ser117.

It belongs to the class I-like SAM-binding methyltransferase superfamily. MenG/UbiE family.

It carries out the reaction a 2-demethylmenaquinol + S-adenosyl-L-methionine = a menaquinol + S-adenosyl-L-homocysteine + H(+). It functions in the pathway quinol/quinone metabolism; menaquinone biosynthesis; menaquinol from 1,4-dihydroxy-2-naphthoate: step 2/2. Its function is as follows. Methyltransferase required for the conversion of demethylmenaquinol (DMKH2) to menaquinol (MKH2). In Mycobacterium marinum (strain ATCC BAA-535 / M), this protein is Demethylmenaquinone methyltransferase.